A 156-amino-acid chain; its full sequence is ATP synthase subunit b (156 aa).

Residues 7 to 29 (LIGQSVAFLIFVWFCMKFVWPPL) form a helical membrane-spanning segment.

It belongs to the ATPase B chain family. In terms of assembly, F-type ATPases have 2 components, F(1) - the catalytic core - and F(0) - the membrane proton channel. F(1) has five subunits: alpha(3), beta(3), gamma(1), delta(1), epsilon(1). F(0) has three main subunits: a(1), b(2) and c(10-14). The alpha and beta chains form an alternating ring which encloses part of the gamma chain. F(1) is attached to F(0) by a central stalk formed by the gamma and epsilon chains, while a peripheral stalk is formed by the delta and b chains.

It is found in the cell inner membrane. F(1)F(0) ATP synthase produces ATP from ADP in the presence of a proton or sodium gradient. F-type ATPases consist of two structural domains, F(1) containing the extramembraneous catalytic core and F(0) containing the membrane proton channel, linked together by a central stalk and a peripheral stalk. During catalysis, ATP synthesis in the catalytic domain of F(1) is coupled via a rotary mechanism of the central stalk subunits to proton translocation. Functionally, component of the F(0) channel, it forms part of the peripheral stalk, linking F(1) to F(0). This Shewanella denitrificans (strain OS217 / ATCC BAA-1090 / DSM 15013) protein is ATP synthase subunit b.